A 118-amino-acid chain; its full sequence is NADH-quinone oxidoreductase subunit A (118 aa).

The next 3 membrane-spanning stretches (helical) occupy residues 8-28 (IGIFLVAAISFPLIPLVLAFF), 64-84 (ALAFVIFDIEVIFLYPWAVAF), and 87-107 (VGLYGLIAATIFLLMLFAGLL).

The protein belongs to the complex I subunit 3 family. NDH-1 is composed of 14 different subunits. Subunits NuoA, H, J, K, L, M, N constitute the membrane sector of the complex.

The protein localises to the cell membrane. The catalysed reaction is a quinone + NADH + 5 H(+)(in) = a quinol + NAD(+) + 4 H(+)(out). Functionally, NDH-1 shuttles electrons from NADH, via FMN and iron-sulfur (Fe-S) centers, to quinones in the respiratory chain. The immediate electron acceptor for the enzyme in this species is believed to be ubiquinone. Couples the redox reaction to proton translocation (for every two electrons transferred, four hydrogen ions are translocated across the cytoplasmic membrane), and thus conserves the redox energy in a proton gradient. The sequence is that of NADH-quinone oxidoreductase subunit A from Chloroflexus aurantiacus (strain ATCC 29366 / DSM 635 / J-10-fl).